Consider the following 180-residue polypeptide: MLENDIKKVLYSEEDIILKTKELGAKLTADYAGKNPLLVGVLKGSVPFMAELLKHIDTHVEIDFMVVSSYHGGTTSSGEVKILKDVDTNIEGRDVIFIEDIIDTGRTLKYLRDMFKYRQANSVKVATLFDKPEGRLVDIDADYVCYDIPNEFIVGFGLDYAENYRNLPYVGVLKEEIYSK.

Positions 43 and 44 each coordinate diphosphate. Mg(2+) is bound by residues glutamate 99 and aspartate 100. Aspartate 103 acts as the Proton acceptor in catalysis. GMP is bound by residues lysine 131, phenylalanine 152–isoleucine 153, and aspartate 159. Arginine 165 provides a ligand contact to diphosphate.

The protein belongs to the purine/pyrimidine phosphoribosyltransferase family. Mg(2+) is required as a cofactor.

It localises to the cytoplasm. The enzyme catalyses IMP + diphosphate = hypoxanthine + 5-phospho-alpha-D-ribose 1-diphosphate. It carries out the reaction GMP + diphosphate = guanine + 5-phospho-alpha-D-ribose 1-diphosphate. The protein operates within purine metabolism; IMP biosynthesis via salvage pathway; IMP from hypoxanthine: step 1/1. Its pathway is purine metabolism; GMP biosynthesis via salvage pathway; GMP from guanine: step 1/1. Purine salvage pathway enzyme that catalyzes the transfer of the ribosyl-5-phosphate group from 5-phospho-alpha-D-ribose 1-diphosphate (PRPP) to the N9 position of the 6-oxopurines hypoxanthine and guanine to form the corresponding ribonucleotides IMP (inosine 5'-monophosphate) and GMP (guanosine 5'-monophosphate), with the release of PPi. This is Hypoxanthine-guanine phosphoribosyltransferase (hpt) from Streptococcus agalactiae serotype III (strain NEM316).